Consider the following 776-residue polypeptide: Hepatocyte growth factor-regulated tyrosine kinase substrate (776 aa).

In terms of domain architecture, VHS spans 15–143; sequence ATSQLLLETD…IMKVEGHVFP (129 aa). Residues 160–220 form an FYVE-type zinc finger; that stretch reads WVDAEECHRC…VCEPCYEQLN (61 aa). The Zn(2+) site is built by cysteine 166, cysteine 169, cysteine 182, cysteine 185, cysteine 190, and cysteine 193. An N6-acetyllysine modification is found at lysine 207. Positions 212 and 215 each coordinate Zn(2+). A Phosphotyrosine modification is found at tyrosine 216. The segment at 223 to 319 is disordered; that stretch reads AEGKAASTTE…SPVNSSAPLA (97 aa). The interval 225-542 is interaction with SNX1; that stretch reads GKAASTTELP…QRLQEQEKER (318 aa). In terms of domain architecture, UIM spans 258-277; the sequence is QEEEELQLALALSQSEAEEK. Residues 294–311 show a composition bias toward low complexity; the sequence is PAPLASSAPPAGSLYSSP. Phosphotyrosine is present on residues tyrosine 308, tyrosine 329, and tyrosine 334. A disordered region spans residues 338–401; that stretch reads KQEEARKSPT…SEQYQNGESE (64 aa). A compositionally biased stretch (polar residues) spans 379 to 398; it reads TDSQPITSCSGPFSEQYQNG. The interaction with SNAP25 and TRAK2 stretch occupies residues 444-542; sequence SINSTHPQLL…QRLQEQEKER (99 aa). Residues 453-571 are interaction with STAM; the sequence is LELLNRLDER…FPLPYAQLQA (119 aa). The interaction with NF2 stretch occupies residues 479–776; the sequence is ARGALSALRE…GNETQLISFD (298 aa). Lysine 550 is modified (N6-succinyllysine). Positions 719-776 are disordered; the sequence is GQDASLPAQQPYITGQQPMYQQMAPSTGPPQQQPPVAQPPPTQGPPAQGNETQLISFD. Over residues 725 to 743 the composition is skewed to polar residues; it reads PAQQPYITGQQPMYQQMAP. The span at 745–762 shows a compositional bias: pro residues; that stretch reads TGPPQQQPPVAQPPPTQG. The segment covering 767–776 has biased composition (polar residues); sequence GNETQLISFD.

As to quaternary structure, component of the ESCRT-0 complex composed of STAM or STAM2 and HGS. Part of a complex at least composed of HSG, STAM2 (or probably STAM) and EPS15. Interacts with STAM. Interacts with STAM2. Interacts with EPS15; the interaction is direct, calcium-dependent and inhibited by SNAP25. Identified in a complex with STAM and LITAF. Found in a complex with STAM and E3 ligase ITCH and DTX3L. Interacts with E3 ligase DTX3L; the interaction brings together STAM and HSG, promotes their recruitment to early endosomes and decreases STAM and HGS ubiquitination by ITCH. Interacts with NF2; the interaction is direct. Interacts with ubiquitin; the interaction is direct. Interacts with VPS37C. Interacts with SMAD1, SMAD2 and SMAD3. Interacts with TSG101; the interaction mediates the association with the ESCRT-I complex. Interacts with SNAP25; the interaction is direct and decreases with addition of increasing concentrations of free calcium. Interacts with SNX1; the interaction is direct. Component of a 550 kDa membrane complex at least composed of HGS and SNX1 but excluding EGFR. Interacts with TRAK2. Interacts with TRAK1. Component of the CART complex, at least composed of ACTN4, HGS/HRS, MYO5B and TRIM3. Interacts (via UIM domain) with UBQLN1 (via ubiquitin-like domain). Interacts with ARRDC3. Identified in a complex containing at least ARRDC4, AVPR2 and HGS. Interacts with LAPTM4B; promotes HGS ubiquitination. Phosphorylated on Tyr-334. This phosphorylation occurs in response to EGF. A minor site of phosphorylation on Tyr-329 is detected. Protein phosphorylation may also be triggered in response to IL-2, GM-CSF and HGF. In terms of processing, ubiquitinated by ITCH. Ubiquitously expressed.

The protein localises to the cytoplasm. The protein resides in the early endosome membrane. Its subcellular location is the endosome. It localises to the multivesicular body membrane. Involved in intracellular signal transduction mediated by cytokines and growth factors. When associated with STAM, it suppresses DNA signaling upon stimulation by IL-2 and GM-CSF. Could be a direct effector of PI3-kinase in vesicular pathway via early endosomes and may regulate trafficking to early and late endosomes by recruiting clathrin. May concentrate ubiquitinated receptors within clathrin-coated regions. Involved in down-regulation of receptor tyrosine kinase via multivesicular body (MVBs) when complexed with STAM (ESCRT-0 complex). The ESCRT-0 complex binds ubiquitin and acts as a sorting machinery that recognizes ubiquitinated receptors and transfers them to further sequential lysosomal sorting/trafficking processes. Involved in receptor recycling via its association with the CART complex, a multiprotein complex required for efficient transferrin receptor recycling but not for EGFR degradation. May contribute to the efficient recruitment of SMADs to the activin receptor complex. The polypeptide is Hepatocyte growth factor-regulated tyrosine kinase substrate (Hgs) (Rattus norvegicus (Rat)).